We begin with the raw amino-acid sequence, 602 residues long: Elongation factor 4 (602 aa).

The tr-type G domain maps to 5–187 (DHIRNFSIIA…ALVKRIPAPK (183 aa)). GTP is bound by residues 17-22 (DHGKST) and 134-137 (NKID).

This sequence belongs to the TRAFAC class translation factor GTPase superfamily. Classic translation factor GTPase family. LepA subfamily.

It is found in the cell inner membrane. It catalyses the reaction GTP + H2O = GDP + phosphate + H(+). Its function is as follows. Required for accurate and efficient protein synthesis under certain stress conditions. May act as a fidelity factor of the translation reaction, by catalyzing a one-codon backward translocation of tRNAs on improperly translocated ribosomes. Back-translocation proceeds from a post-translocation (POST) complex to a pre-translocation (PRE) complex, thus giving elongation factor G a second chance to translocate the tRNAs correctly. Binds to ribosomes in a GTP-dependent manner. In Zymomonas mobilis subsp. mobilis (strain ATCC 31821 / ZM4 / CP4), this protein is Elongation factor 4.